The chain runs to 263 residues: RNA exonuclease 4 (263 aa).

The interval 1–27 is disordered; sequence MRLSSNWSKLQDGVTKKAGKKRIDKKP. A compositionally biased stretch (basic residues) spans 17 to 27; that stretch reads KAGKKRIDKKP. Residues 95-247 form the Exonuclease domain; it reads YIAMDCEFVG…EDARATMLIY (153 aa).

It belongs to the REXO4 family.

Its subcellular location is the nucleus. Exoribonuclease involved in ribosome biosynthesis. Involved in the processing of ITS1, the internal transcribed spacer localized between the 18S and 5.8S rRNAs. The chain is RNA exonuclease 4 (REX4) from Candida glabrata (strain ATCC 2001 / BCRC 20586 / JCM 3761 / NBRC 0622 / NRRL Y-65 / CBS 138) (Yeast).